Here is an 87-residue protein sequence, read N- to C-terminus: Putative BTB/POZ domain-containing protein At3g29740 (87 aa).

The 64-residue stretch at 24-87 (VDVRLKAGDS…KHTELVALVE (64 aa)) folds into the BTB domain.

It functions in the pathway protein modification; protein ubiquitination. May act as a substrate-specific adapter of an E3 ubiquitin-protein ligase complex (CUL3-RBX1-BTB) which mediates the ubiquitination and subsequent proteasomal degradation of target proteins. In Arabidopsis thaliana (Mouse-ear cress), this protein is Putative BTB/POZ domain-containing protein At3g29740.